The primary structure comprises 440 residues: FAD-dependent monooxygenase FVEG_08293 (440 aa).

A helical membrane pass occupies residues 7-26 (EFNVAIVGAGVAGLALAMAL). FAD is bound by residues E37 and G50. N-linked (GlcNAc...) asparagine glycosylation occurs at N77. Residue R122 participates in FAD binding. Active-site residues include R203 and Y235. Positions 317 and 330 each coordinate FAD.

The protein belongs to the paxM FAD-dependent monooxygenase family. FAD is required as a cofactor.

It localises to the membrane. FAD-dependent monooxygenase; part of the Fusarium detoxification of benzoxazolinone cluster 1 (FDB1) involved in the degradation of benzoxazolinones produced by the host plant. Maize, wheat, and rye produce the 2 benzoxazinone phytoanticipins 2,4-dihy-droxy-7-methoxy-1,4-benzoxazin-3-one (DIMBOA) and 2,4-dihydroxy-1,4-benzoxazin-3-one (DIBOA) that, due to their inherent instability once released, spontaneously degrade to the more stable corresponding benzoxazolinones, 6-methoxy-2-benzoxazolinone (MBOA) and 2-benzoxazolinone (BOA), respectively. The first step in the detoxification of benzoxazolinones involves the hydrolysis of the cyclic ester bond of benzoxazolinones by the FDB1 cluster gamma-lactamase MBL1 to aminophenols. MBL1 is able to convert BOA into 2-aminophenol (2-AP), as well as MBOA into 5-methoxy-2-aminophenol (2-AMP). The FDB2 cluster N-malonyltransferase FDB2/NAT1 then metabolizes aminophenols via N-malonylation to non-toxic malonamic acids. FDB2/NAT1 converts 2-AP into N-(2-hydroxyphenyl) malonamic acid (HPMA) and 2-AMP into N-(2-hydroxy-4-methoxyphenyl) malonamic acid (HMPMA). The duplicated dienlactone hydrolases DLH1 and DLH2 may provide redundant function for hydrolyzing the lactone moiety in the BOA molecule. The roles of the amidases an other enzymes encoded by the 2 FDB clusters have not been identified so far. This is FAD-dependent monooxygenase FVEG_08293 from Gibberella moniliformis (strain M3125 / FGSC 7600) (Maize ear and stalk rot fungus).